Here is a 99-residue protein sequence, read N- to C-terminus: Protein adenylyltransferase MntA (99 aa).

The GSX(10)DXD motif motif lies at 33 to 47 (GSYVRGEAKEDSDVD). Active-site residues include aspartate 45 and aspartate 47. Mg(2+)-binding residues include aspartate 45, aspartate 47, and aspartate 77.

This sequence belongs to the MntA antitoxin family. Mg(2+) is required as a cofactor.

It catalyses the reaction L-tyrosyl-[protein] + ATP = O-(5'-adenylyl)-L-tyrosyl-[protein] + diphosphate. The catalysed reaction is O-(5'-adenylyl)-L-tyrosyl-[protein] + ATP = O-[5'-(adenylyl-(5'-&gt;3')-adenylyl)]-L-tyrosyl-[protein] + diphosphate. Its function is as follows. Antitoxin component of a type VII toxin-antitoxin (TA) system. Overexpression in E.coli neutralizes the toxic effect of cognate toxin HepT. Neutralization is mostly due to AMPylation of the toxin by this enzyme. In Thermococcus cleftensis (strain DSM 27260 / KACC 17922 / CL1), this protein is Protein adenylyltransferase MntA.